Consider the following 481-residue polypeptide: MATLMVQGCTSDAGKSTVVAALCRWFARRGYSVAPFKPQNMALNSAVTVDGGEIGRSTALQALACGVAPHSDMNPVLLKPQTDMGAQVIIRGKVLGNMQALDYHAYKNTASEAVLAAWQDLSSRFDVIIAEGAGSPAEINLRDNDIANMGFAERVDCPVIVVADIDRGGVFAHLTGTLDLLSESEQKRTLGFVINRFRGDLSLLQGGLDWLEERTGKPVFGVLPYLHGLTLDAEDAVDEQGAHDVGAFNVVVPLLPRMSNHNDFDPLRLHPQVNLQFVKMGEAWPSADLIILPGSKATRADLAFLRQQGWDKQIEKHLRYGGKVLGICGGFQMLGERIDDPEGLESDAGSSAGLGWLSMTTRLISGKQLRNVEGRFVAADTLIRGYEIHNGLTQGEALKHPMLVLEGRDDGAMSEDGRVMGCYLHGLFDVPDSCNTILEWAGLKSQRSVDYAVHREQQLDRLADMLEEHLDMTRLKQCMGS.

One can recognise a GATase cobBQ-type domain in the interval 247 to 433 (AFNVVVPLLP…LHGLFDVPDS (187 aa)). The active-site Nucleophile is the Cys-328. The active site involves His-425.

It belongs to the CobB/CobQ family. CobQ subfamily.

The protein operates within cofactor biosynthesis; adenosylcobalamin biosynthesis. Its function is as follows. Catalyzes amidations at positions B, D, E, and G on adenosylcobyrinic A,C-diamide. NH(2) groups are provided by glutamine, and one molecule of ATP is hydrogenolyzed for each amidation. This Alcanivorax borkumensis (strain ATCC 700651 / DSM 11573 / NCIMB 13689 / SK2) protein is Cobyric acid synthase.